The sequence spans 92 residues: Cell division topological specificity factor (92 aa).

It belongs to the MinE family.

Its function is as follows. Prevents the cell division inhibition by proteins MinC and MinD at internal division sites while permitting inhibition at polar sites. This ensures cell division at the proper site by restricting the formation of a division septum at the midpoint of the long axis of the cell. This chain is Cell division topological specificity factor, found in Colwellia psychrerythraea (strain 34H / ATCC BAA-681) (Vibrio psychroerythus).